We begin with the raw amino-acid sequence, 96 residues long: Small ribosomal subunit protein uS19 (96 aa).

The protein belongs to the universal ribosomal protein uS19 family.

Its function is as follows. Protein S19 forms a complex with S13 that binds strongly to the 16S ribosomal RNA. The chain is Small ribosomal subunit protein uS19 from Solibacter usitatus (strain Ellin6076).